We begin with the raw amino-acid sequence, 943 residues long: MDAGLSTMATRNGQSSARVKLRNNLLNNDIGNIDIRDETPISRNGNDSNINIQPSSVPQQQQQQQQYYRNGMNEAPIQAPLQQRQIPMQNYSQQQRQQQQYNFEYSNPHMNEIPLMQHNFTKPSLSNNRDNVNGKKASSFTQSSFSNFFKHKHQFGKSKKNTKGTGGGGDGDDDDEVILDDSANSDLTFNDIQTFGHKGGDKYGYGGDSTPIIPTLVTKDRGNMSNTEYRKYITNQRKTAMNAMAKQTKNGTLASLPPRAMSLQSFPNGNPLMQAPTPHPRFQPNKMVSANYSRSNSLMSGPPGQFRQPQQQRMLPMNNYNNHPGQFQNTPPVMPSGQQPPQQPRTLSLTNGPRYSPQNPRPFAGHQQISQRQQQQQQQLQLHPMSEGYRTMSLQSQNVPQGFNPWSPNDNDRKAVSMKQPISQSSISSKNNSAYSIPNVQNNSLTTFSPSSPTDATAMPNSTKQGSSPLKKQVNIDQPIENKGKLNVLQLSTPQQNELKEKERKLAEMEKSLREREALVEEKEKERAEKNTEANEEEEISHESDDLNLRPASALETGLKDLKLESESAVANRASLSTFSSTFSDSPSKQRIINTRTGMYKLENSTDINEYVTAQEFPSPGKYNSNSDNGEMNTTNEVDFDFNTSKRASLLQSIPERDPKRNVSDATIKRRESDGNGRRLSNVNISMNQENINNDTFLYKKNNRDGHLSAVSHMSSSSRRSFISNTLPLNIDSASESDNFVPHMDGSPSKTKSAPVSYDKDGMNASEEDFSFDNTLAKPYEPLYARRGDITSAGSTSGEDSSQPKMITISGEQLNLITENKELMNELTLVSTELAESIKRETELEERIRLYETNNSAPSFDDSSSVSFSDFEKELRKKSSKIVQLIQQLNDERLKRFIAEEQLLLQENGTKPSSMELVGRIENLNKLIDERDSEIEMLKGRLQ.

Position 1 is an N-acetylmethionine (Met-1). Disordered regions lie at residues 37–63 (DETP…QQQQ), 152–177 (KHQF…DDEV), 315–381 (LPMN…QQLQ), 397–472 (QNVP…PLKK), and 515–546 (EREA…ESDD). A compositionally biased stretch (polar residues) spans 41 to 58 (ISRNGNDSNINIQPSSVP). Over residues 152–162 (KHQFGKSKKNT) the composition is skewed to basic residues. Residues 318–358 (NNYNNHPGQFQNTPPVMPSGQQPPQQPRTLSLTNGPRYSPQ) are compositionally biased toward polar residues. Low complexity predominate over residues 367 to 381 (QQISQRQQQQQQQLQ). Positions 397–409 (QNVPQGFNPWSPN) are enriched in polar residues. Residues 417 to 433 (SMKQPISQSSISSKNNS) show a composition bias toward low complexity. Positions 434 to 470 (AYSIPNVQNNSLTTFSPSSPTDATAMPNSTKQGSSPL) are enriched in polar residues. A compositionally biased stretch (basic and acidic residues) spans 515–533 (EREALVEEKEKERAEKNTE). Phosphoserine is present on residues Ser-553, Ser-586, and Ser-619. The segment at 616 to 639 (EFPSPGKYNSNSDNGEMNTTNEVD) is disordered. Positions 622–639 (KYNSNSDNGEMNTTNEVD) are enriched in polar residues. Ser-649 bears the Phosphoserine mark. Residues 654–683 (IPERDPKRNVSDATIKRRESDGNGRRLSNV) are disordered. The span at 655–677 (PERDPKRNVSDATIKRRESDGNG) shows a compositional bias: basic and acidic residues. Phosphoserine occurs at positions 681, 766, and 771.

This is an uncharacterized protein from Saccharomyces cerevisiae (strain ATCC 204508 / S288c) (Baker's yeast).